The primary structure comprises 74 residues: Large ribosomal subunit protein bL27c (74 aa).

The protein belongs to the bacterial ribosomal protein bL27 family.

The protein resides in the plastid. The protein localises to the chloroplast. The polypeptide is Large ribosomal subunit protein bL27c (rpl27) (Pleurochrysis haptonemofera (Unicellular marine alga)).